We begin with the raw amino-acid sequence, 128 residues long: Large ribosomal subunit protein bL12 (128 aa).

It belongs to the bacterial ribosomal protein bL12 family. In terms of assembly, homodimer. Part of the ribosomal stalk of the 50S ribosomal subunit. Forms a multimeric L10(L12)X complex, where L10 forms an elongated spine to which 2 to 4 L12 dimers bind in a sequential fashion. Binds GTP-bound translation factors.

Functionally, forms part of the ribosomal stalk which helps the ribosome interact with GTP-bound translation factors. Is thus essential for accurate translation. The sequence is that of Large ribosomal subunit protein bL12 from Sulfurihydrogenibium sp. (strain YO3AOP1).